A 290-amino-acid chain; its full sequence is Probable aquaporin PIP2-7 (290 aa).

The next 2 helical transmembrane spans lie at alanine 45–isoleucine 65 and glycine 79–cysteine 99. The short motif at asparagine 109–alanine 111 is the NPA 1 element. A run of 3 helical transmembrane segments spans residues valine 128–isoleucine 148, serine 168–phenylalanine 188, and isoleucine 202–isoleucine 222. The NPA 2 motif lies at asparagine 230 to alanine 232. A helical transmembrane segment spans residues isoleucine 252 to leucine 272.

Belongs to the MIP/aquaporin (TC 1.A.8) family. PIP (TC 1.A.8.11) subfamily. As to expression, expressed in roots.

The protein localises to the cell membrane. Aquaporins facilitate the transport of water and small neutral solutes across cell membranes. This chain is Probable aquaporin PIP2-7 (PIP2-7), found in Oryza sativa subsp. japonica (Rice).